A 423-amino-acid polypeptide reads, in one-letter code: Deferrochelatase (423 aa).

The segment at residues 1 to 35 is a signal peptide (tat-type signal); it reads MQYEDENGVNEPSRRRLLKGIGALALAGSCPVAHA. Heme b-binding positions include 236-238, His329, 334-336, and Arg347; these read GTA and NPR.

This sequence belongs to the DyP-type peroxidase family. EfeB subfamily. As to quaternary structure, homodimer. Part of a ferrous iron transporter composed of EfeU, EfeO and EfeB. Heme b serves as cofactor. Predicted to be exported by the Tat system. The position of the signal peptide cleavage has not been experimentally proven.

It is found in the periplasm. The enzyme catalyses heme b + 2 H(+) = protoporphyrin IX + Fe(2+). Involved in the recovery of exogenous heme iron. Extracts iron from heme while preserving the protoporphyrin ring intact. This Escherichia coli O6:H1 (strain CFT073 / ATCC 700928 / UPEC) protein is Deferrochelatase (efeB).